Here is a 442-residue protein sequence, read N- to C-terminus: tRNA modification GTPase MnmE (442 aa).

The (6S)-5-formyl-5,6,7,8-tetrahydrofolate site is built by Arg21, Glu79, and Lys118. The TrmE-type G domain maps to 214 to 367 (GFKIAIIGKP…LKEELQNYLN (154 aa)). Asn224 lines the K(+) pocket. GTP contacts are provided by residues 224–229 (NVGKSS), 243–249 (SDIAGTT), and 268–271 (DTAG). Ser228 provides a ligand contact to Mg(2+). K(+) contacts are provided by Ser243, Ile245, and Thr248. Thr249 is a Mg(2+) binding site. Lys442 contributes to the (6S)-5-formyl-5,6,7,8-tetrahydrofolate binding site.

Belongs to the TRAFAC class TrmE-Era-EngA-EngB-Septin-like GTPase superfamily. TrmE GTPase family. Homodimer. Heterotetramer of two MnmE and two MnmG subunits. K(+) is required as a cofactor.

It is found in the cytoplasm. Its function is as follows. Exhibits a very high intrinsic GTPase hydrolysis rate. Involved in the addition of a carboxymethylaminomethyl (cmnm) group at the wobble position (U34) of certain tRNAs, forming tRNA-cmnm(5)s(2)U34. In Campylobacter jejuni subsp. doylei (strain ATCC BAA-1458 / RM4099 / 269.97), this protein is tRNA modification GTPase MnmE.